The primary structure comprises 380 residues: MGAAAAEAPLRLPAAPPLAFCCYTSVLLLFAFSLPGSRASNQPPGGGGGSGGDCPGGKGKSINCSELNVRESDVRVCDESSCKYGGVCKEDGDGLKCACQFQCHTNYIPVCGSNGDTYQNECFLRRAACKHQKEITVIARGPCYSDNGSGSGEGEEEGSGAEVHRKHSKCGPCKYKAECDEDAENVGCVCNIDCSGYSFNPVCASDGSSYNNPCFVREASCIKQEQIDIRHLGHCTDTDDTSLLGKKDDGLQYRPDVKDASDQREDVYIGNHMPCPENLNGYCIHGKCEFIYSTQKASCRCESGYTGQHCEKTDFSILYVVPSRQKLTHVLIAAIIGAVQIAIIVAIVMCITRKCPKNNRGRRQKQNLGHFTSDTSSRMV.

The first 39 residues, methionine 1–alanine 39, serve as a signal peptide directing secretion. Topologically, residues serine 40–valine 330 are extracellular. Kazal-like domains are found at residues alanine 98 to serine 145 and valine 189 to aspartate 237. Intrachain disulfides connect cysteine 99/cysteine 129, cysteine 103/cysteine 122, cysteine 111/cysteine 143, cysteine 190/cysteine 221, cysteine 194/cysteine 214, cysteine 203/cysteine 235, cysteine 275/cysteine 288, cysteine 283/cysteine 299, and cysteine 301/cysteine 310. The region spanning asparagine 271–glutamate 311 is the EGF-like domain. Residues leucine 331–isoleucine 351 form a helical membrane-spanning segment. The Cytoplasmic portion of the chain corresponds to threonine 352–valine 380. The segment at asparagine 359–valine 380 is disordered. Polar residues predominate over residues glutamine 366–valine 380.

Belongs to the tomoregulin family. May interact with ST14. As to expression, expressed predominantly in brain, and at lower levels in heart, placenta and skeletal muscle. Down-regulated in brain tumors as compared to control brain tissues.

It is found in the cell membrane. Its function is as follows. Neuron-specific restriction factor that prevents herpes simplex virus 1 (HHV-1) infection in the brain by blocking viral entry. Also able to restrict herpes simplex virus 2 (HHV-2) infection, although to a lesser extent. Acts by preventing the association between the viral glycoprotein D (gD) and its cell surface receptor NECTIN1, thereby inhibiting fusion of the virus and the cell membrane. Also able to prevent the association between the viral glycoprotein B (gB) and MYH9/NMMHC-IIA and MYH10/NMMHC-IIB receptors. May be a tumor suppressor in brain cancers. The sequence is that of Tomoregulin-1 from Homo sapiens (Human).